The chain runs to 471 residues: Putative multidrug resistance protein MdtD (471 aa).

The Periplasmic portion of the chain corresponds to 1–11 (MTDLPDSTRWQ). The chain crosses the membrane as a helical span at residues 12–32 (LWIVAFGFFMQSLDTTIVNTA). The Cytoplasmic segment spans residues 33-48 (LPSMAQSLGESPLHMH). The chain crosses the membrane as a helical span at residues 49–69 (MVIVSYVLTVAVMLPASGWLA). Over 70-76 (DKVGVRN) the chain is Periplasmic. The helical transmembrane segment at 77–97 (IFFTAIVLFTLGSLFCALSGT) threads the bilayer. Residues 98 to 101 (LNEL) are Cytoplasmic-facing. A helical membrane pass occupies residues 102 to 124 (LLARALQGVGGAMMVPVGRLTVM). Residues 125-137 (KIVPREQYMAAMT) are Periplasmic-facing. A helical membrane pass occupies residues 138-158 (FVTLPGQVGPLLGPALGGLLV). The Cytoplasmic segment spans residues 159-164 (EYASWH). A helical transmembrane segment spans residues 165-185 (WIFLINIPVGIIGAIATLMLM). At 186-196 (PNYTMQTRRFD) the chain is on the periplasmic side. Residues 197–217 (LSGFLLLAVGMAVLTLALDGS) traverse the membrane as a helical segment. Residues 218–224 (KGTGLSP) are Cytoplasmic-facing. A helical membrane pass occupies residues 225–245 (LAIAGLVAVGVVALVLYLLHA). Topologically, residues 246 to 262 (RNNNRALFSLKLFRTRT) are periplasmic. A helical transmembrane segment spans residues 263–283 (FSLGLAGSFAGRIGSGMLPFM). The Cytoplasmic portion of the chain corresponds to 284–285 (TP). A helical transmembrane segment spans residues 286–306 (VFLQIGLGFSPFHAGLMMIPM). At 307 to 341 (VLGSMGMKRIVVQVVNRFGYRRVLVATTLGLSLVT) the chain is on the periplasmic side. Residues 342 to 362 (MLFMTTALLGWYYVLPFVLFL) traverse the membrane as a helical segment. The Cytoplasmic segment spans residues 363–395 (QGMVNSTRFSSMNTLTLKDLPDNLASSGNSLLS). A helical membrane pass occupies residues 396–416 (MIMQLSMSIGVTIAGLLLGLF). The Periplasmic portion of the chain corresponds to 417–430 (GSQHVSVDSGTTQT). A helical membrane pass occupies residues 431–451 (VFMYTWLSMAFIIALPAFIFA). At 452 to 471 (RVPNDTHQNVAISRRKRSAQ) the chain is on the cytoplasmic side.

Belongs to the major facilitator superfamily. TCR/Tet family.

Its subcellular location is the cell inner membrane. In Escherichia coli O7:K1 (strain IAI39 / ExPEC), this protein is Putative multidrug resistance protein MdtD.